The chain runs to 210 residues: Actin-related protein 3C (210 aa).

The first 21 residues, 1 to 21 (MFESFNVPGLYIAVQAVLALA), serve as a signal peptide directing secretion.

This sequence belongs to the actin family. Expressed in kidney, stomach, spleen, bone marrow, uterus, testis, placenta, skeletal muscle, mammary gland, lung, fetal liver, and fetal kidney, but not detected in small intestine, brain, and thymus. Expressed in low-metastatic lung adenocarcinoma cells but not in high-metastatic ones.

May play a role in the suppression of metastatic potential in lung adenoma carcinoma cells. The polypeptide is Actin-related protein 3C (ACTR3C) (Homo sapiens (Human)).